An 86-amino-acid chain; its full sequence is Small ribosomal subunit protein uS17 (86 aa).

The protein belongs to the universal ribosomal protein uS17 family. As to quaternary structure, part of the 30S ribosomal subunit.

Its function is as follows. One of the primary rRNA binding proteins, it binds specifically to the 5'-end of 16S ribosomal RNA. The protein is Small ribosomal subunit protein uS17 of Halorhodospira halophila (strain DSM 244 / SL1) (Ectothiorhodospira halophila (strain DSM 244 / SL1)).